Reading from the N-terminus, the 210-residue chain is Glutathione S-transferase P (210 aa).

A GST N-terminal domain is found at 2–81 (PPYTIVYFPV…HLGRTLGLYG (80 aa)). Tyr-4 carries the phosphotyrosine; by EGFR modification. Glutathione-binding positions include Tyr-8, Arg-14, Trp-39, Lys-45, and 52-53 (QL). Thr-62 is modified (phosphothreonine). Glutathione is bound at residue 65-66 (QS). The 122-residue stretch at 83 to 204 (DQQEAALVDM…ASPEHMNRPI (122 aa)) folds into the GST C-terminal domain. An N6-succinyllysine mark is found at Lys-103 and Lys-116. Position 128 is an N6-acetyllysine (Lys-128).

Belongs to the GST superfamily. Pi family. As to quaternary structure, homodimer. Interacts with CDK5.

The protein localises to the cytoplasm. The protein resides in the mitochondrion. It localises to the nucleus. The enzyme catalyses RX + glutathione = an S-substituted glutathione + a halide anion + H(+). It carries out the reaction prostaglandin J2 + glutathione = prostaglandin J2-S-(R)-glutathione. It catalyses the reaction prostaglandin J2 + glutathione = prostaglandin J2-S-(S)-glutathione. The catalysed reaction is prostaglandin A2 + glutathione = prostaglandin A2-S-(S)-glutathione. The enzyme catalyses 11(S)-hydroxy-14(S),15(S)-epoxy-(5Z,8Z,12E)-eicosatrienoate + glutathione = (11S,15S)-dihydroxy-14(R)-S-glutathionyl-(5Z,8Z,12E)-eicosatrienoate. In terms of biological role, conjugation of reduced glutathione to a wide number of exogenous and endogenous hydrophobic electrophiles. Involved in the formation of glutathione conjugates of both prostaglandin A2 (PGA2) and prostaglandin J2 (PGJ2). Participates in the formation of novel hepoxilin regioisomers. Negatively regulates CDK5 activity via p25/p35 translocation to prevent neurodegeneration. The sequence is that of Glutathione S-transferase P (GSTP1) from Bos taurus (Bovine).